The following is a 566-amino-acid chain: ATP-dependent RNA helicase DBP3 (566 aa).

Residues 1 to 139 (MSAGKKHARD…TTPNGSAQRN (139 aa)) form a disordered region. A compositionally biased stretch (basic residues) spans 39–58 (DKKKKDKKDKKERKEKKEKK). The segment covering 81 to 91 (SEPKPEKEKKE) has biased composition (basic and acidic residues). Residues 92 to 102 (KNNKKDKKDKK) are compositionally biased toward basic residues. Over residues 127–139 (AATTTPNGSAQRN) the composition is skewed to polar residues. The Q motif signature appears at 182-209 (IHFSHLPTSTLTSKKPFASFTAPTPIQA). The 185-residue stretch at 212-396 (WPFALSGRDV…EGFMIDPVKA (185 aa)) folds into the Helicase ATP-binding domain. Position 225–232 (225–232 (AETGSGKT)) interacts with ATP. The DEAD box signature appears at 342-345 (DEAD). Positions 433–566 (GKEQRLLELL…TEHDKSHSGS (134 aa)) constitute a Helicase C-terminal domain.

Belongs to the DEAD box helicase family. DDX5/DBP2 subfamily.

The protein localises to the nucleus. The protein resides in the nucleolus. The catalysed reaction is ATP + H2O = ADP + phosphate + H(+). Functionally, ATP-dependent RNA helicase required for 60S ribosomal subunit synthesis. Involved in efficient pre-rRNA processing, predominantly at site A3, which is necessary for the normal formation of 25S and 5.8S rRNAs. The protein is ATP-dependent RNA helicase DBP3 (DBP3) of Chaetomium globosum (strain ATCC 6205 / CBS 148.51 / DSM 1962 / NBRC 6347 / NRRL 1970) (Soil fungus).